We begin with the raw amino-acid sequence, 94 residues long: Putative regulatory protein Tmel_0100 (94 aa).

Belongs to the RemA family.

This Thermosipho melanesiensis (strain DSM 12029 / CIP 104789 / BI429) protein is Putative regulatory protein Tmel_0100.